The following is a 918-amino-acid chain: Band 3 anion exchange protein (918 aa).

A disordered region spans residues 1 to 48 (MENDLSFGEDVMSYEEESDSAFPSPIRPTPPGHSGNYDLEQSRQEEDS). The Cytoplasmic portion of the chain corresponds to 1–392 (MENDLSFGED…ISDFTDALDP (392 aa)). Residues 393 to 416 (QVLAAVIFIYFAALSPAITFGGLL) traverse the membrane as a helical segment. Over 417–424 (ADKTEHMM) the chain is Extracellular. The helical transmembrane segment at 425 to 445 (GVSELMISTCVQGIIFAFIAA) threads the bilayer. The Cytoplasmic segment spans residues 446 to 448 (QPT). The chain crosses the membrane as a discontinuously helical span at residues 449 to 465 (LVIGFSGPLLVFEEAFF). Residues 466-474 (AFCKSQEIE) lie on the Extracellular side of the membrane. A helical transmembrane segment spans residues 475 to 495 (YIVGRIWVGLWLVIIVVVIVA). Residues 496–507 (VEGSFLVKFISR) lie on the Cytoplasmic side of the membrane. The helical transmembrane segment at 508 to 530 (FTQEIFSILISLIFIYETFSKLG) threads the bilayer. Topologically, residues 531–583 (KIFKAHPLVLNYEHLNDSLDNPFHPVVKEHIEYHEDGNKTVHEVIHERAYPNT) are extracellular. N-linked (GlcNAc...) asparagine glycans are attached at residues asparagine 546 and asparagine 568. The chain crosses the membrane as a helical span at residues 584-604 (ALLSMCLMFGCFFIAYFLRQF). At 605-615 (KNGHFLPGPIR) the chain is on the cytoplasmic side. A helical membrane pass occupies residues 616-636 (RMIGDFGVPIAIFFMIAVDIT). Over 637-676 (IEDAYTQKLVVPKGLMVSNPNARGWFINPLGEKKPFPAWM) the chain is Extracellular. The helical transmembrane segment at 677-697 (MGACCVPALLVFILIFLESQI) threads the bilayer. Over 698–713 (TTLIVSKPERKMVKGS) the chain is Cytoplasmic. Residues 714 to 732 (GFHLDLLILVTMGGIASLF) form a helical membrane-spanning segment. Residues 733-750 (GVPWLSAATVRSVTHANA) traverse the membrane as a discontinuously helical segment. Residues 751 to 769 (LTVMSKGPKPEIEKVLEQR) are Cytoplasmic-facing. Transmembrane regions (helical) follow at residues 770–790 (ISGM…PILK) and 791–809 (MIPM…ITSL). At 810–847 (SGIQMWDRMLLLIVPRKYYPADAYAQRVTTMKMHLFTL) the chain is on the cytoplasmic side. Positions 848–878 (IQMVCLGALWMVKMSAFSLALPFVLILTIPL) form an intramembrane region, discontinuously helical. Cysteine 852 carries the S-palmitoyl cysteine lipid modification. The Cytoplasmic portion of the chain corresponds to 879-918 (RMAITGTLFTDKEMKCLDASDGKVKFEEEPGEDMYESPLP).

The protein belongs to the anion exchanger (TC 2.A.31) family. As to quaternary structure, a dimer in solution, it spans the membrane asymmetrically and appears to be tetrameric.

The protein localises to the cell membrane. It carries out the reaction hydrogencarbonate(in) + chloride(out) = hydrogencarbonate(out) + chloride(in). Its function is as follows. Functions both as a transporter that mediates electroneutral anion exchange across the cell membrane and as a structural protein. Major integral membrane glycoprotein of the erythrocyte membrane; required for normal flexibility and stability of the erythrocyte membrane and for normal erythrocyte shape via the interactions of its cytoplasmic domain with cytoskeletal proteins, glycolytic enzymes, and hemoglobin. Functions as a transporter that mediates the 1:1 exchange of inorganic anions across the erythrocyte membrane. Mediates chloride-bicarbonate exchange in the kidney, and is required for normal acidification of the urine. The polypeptide is Band 3 anion exchange protein (slc4a1) (Oncorhynchus mykiss (Rainbow trout)).